We begin with the raw amino-acid sequence, 97 residues long: Large ribosomal subunit protein bL28 (97 aa).

The protein belongs to the bacterial ribosomal protein bL28 family.

This chain is Large ribosomal subunit protein bL28, found in Rickettsia africae (strain ESF-5).